We begin with the raw amino-acid sequence, 280 residues long: 4-diphosphocytidyl-2-C-methyl-D-erythritol kinase (280 aa).

Residue lysine 8 is part of the active site. 91–101 (PVAAGLAGGSA) serves as a coordination point for ATP. The active site involves aspartate 133.

It belongs to the GHMP kinase family. IspE subfamily.

The catalysed reaction is 4-CDP-2-C-methyl-D-erythritol + ATP = 4-CDP-2-C-methyl-D-erythritol 2-phosphate + ADP + H(+). The protein operates within isoprenoid biosynthesis; isopentenyl diphosphate biosynthesis via DXP pathway; isopentenyl diphosphate from 1-deoxy-D-xylulose 5-phosphate: step 3/6. Its function is as follows. Catalyzes the phosphorylation of the position 2 hydroxy group of 4-diphosphocytidyl-2C-methyl-D-erythritol. The sequence is that of 4-diphosphocytidyl-2-C-methyl-D-erythritol kinase from Clostridium acetobutylicum (strain ATCC 824 / DSM 792 / JCM 1419 / IAM 19013 / LMG 5710 / NBRC 13948 / NRRL B-527 / VKM B-1787 / 2291 / W).